The following is a 309-amino-acid chain: Ribosomal RNA small subunit methyltransferase H (309 aa).

S-adenosyl-L-methionine-binding positions include 33-35 (GGH), aspartate 53, phenylalanine 79, aspartate 100, and glutamine 107.

Belongs to the methyltransferase superfamily. RsmH family.

The protein resides in the cytoplasm. The enzyme catalyses cytidine(1402) in 16S rRNA + S-adenosyl-L-methionine = N(4)-methylcytidine(1402) in 16S rRNA + S-adenosyl-L-homocysteine + H(+). In terms of biological role, specifically methylates the N4 position of cytidine in position 1402 (C1402) of 16S rRNA. This Clostridium botulinum (strain Okra / Type B1) protein is Ribosomal RNA small subunit methyltransferase H.